Reading from the N-terminus, the 179-residue chain is Large ribosomal subunit protein uL5 (179 aa).

The protein belongs to the universal ribosomal protein uL5 family. As to quaternary structure, part of the 50S ribosomal subunit; part of the 5S rRNA/L5/L18/L25 subcomplex. Contacts the 5S rRNA and the P site tRNA. Forms a bridge to the 30S subunit in the 70S ribosome.

In terms of biological role, this is one of the proteins that bind and probably mediate the attachment of the 5S RNA into the large ribosomal subunit, where it forms part of the central protuberance. In the 70S ribosome it contacts protein S13 of the 30S subunit (bridge B1b), connecting the 2 subunits; this bridge is implicated in subunit movement. Contacts the P site tRNA; the 5S rRNA and some of its associated proteins might help stabilize positioning of ribosome-bound tRNAs. The polypeptide is Large ribosomal subunit protein uL5 (Geotalea uraniireducens (strain Rf4) (Geobacter uraniireducens)).